The primary structure comprises 500 residues: Protein ASPARTIC PROTEASE IN GUARD CELL 1 (500 aa).

An N-terminal signal peptide occupies residues 1–24; it reads MAFPRFLSLLAVVTLSLFLTTTDA. The Peptidase A1 domain maps to 162–496; it reads YFSRIGVGTP…DLSKNVIGLS (335 aa). The active site involves aspartate 180. Disulfide bonds link cysteine 190/cysteine 193, cysteine 196/cysteine 271, cysteine 217/cysteine 235, cysteine 222/cysteine 230, cysteine 307/cysteine 500, and cysteine 419/cysteine 461. The active site involves aspartate 379.

The protein belongs to the peptidase A1 family. In terms of tissue distribution, expressed in young seedlings, leaves, guard-cells, stems, flowers and siliques, but not in roots or mesophyll cells.

The protein localises to the endoplasmic reticulum. Its activity is regulated as follows. Inhibited by pepstatin A. Functionally, aspartic protease involved in drought avoidance through abscisic acid signaling. The chain is Protein ASPARTIC PROTEASE IN GUARD CELL 1 (ASPG1) from Arabidopsis thaliana (Mouse-ear cress).